The primary structure comprises 215 residues: uncharacterized protein (215 aa).

This is an uncharacterized protein from Saccharomyces cerevisiae (strain ATCC 204508 / S288c) (Baker's yeast).